Here is a 78-residue protein sequence, read N- to C-terminus: Protein FAM240B (78 aa).

This sequence belongs to the FAM240 family.

This Homo sapiens (Human) protein is Protein FAM240B.